The sequence spans 662 residues: Threonine--tRNA ligase (662 aa).

The TGS domain occupies methionine 1 to arginine 64. The catalytic stretch occupies residues aspartate 245–proline 547. Zn(2+) is bound by residues cysteine 341, histidine 392, and histidine 524.

Belongs to the class-II aminoacyl-tRNA synthetase family. Homodimer. Zn(2+) is required as a cofactor.

Its subcellular location is the cytoplasm. The enzyme catalyses tRNA(Thr) + L-threonine + ATP = L-threonyl-tRNA(Thr) + AMP + diphosphate + H(+). In terms of biological role, catalyzes the attachment of threonine to tRNA(Thr) in a two-step reaction: L-threonine is first activated by ATP to form Thr-AMP and then transferred to the acceptor end of tRNA(Thr). Also edits incorrectly charged L-seryl-tRNA(Thr). This chain is Threonine--tRNA ligase, found in Rhizobium rhizogenes (strain K84 / ATCC BAA-868) (Agrobacterium radiobacter).